We begin with the raw amino-acid sequence, 214 residues long: Cytochrome b (214 aa).

4 consecutive transmembrane segments (helical) span residues 31-51 (FGSM…FLAI), 75-96 (WIMQ…YIHI), 111-131 (WLSG…GYVL), and 176-196 (FFAL…IHIL). 2 residues coordinate heme b: histidine 81 and histidine 95. 2 residues coordinate heme b: histidine 180 and histidine 194. Histidine 199 provides a ligand contact to a ubiquinone.

This sequence belongs to the cytochrome b family. As to quaternary structure, the cytochrome bc1 complex contains 3 respiratory subunits (MT-CYB, CYC1 and UQCRFS1), 2 core proteins (UQCRC1 and UQCRC2) and probably 6 low-molecular weight proteins. It depends on heme b as a cofactor.

It localises to the mitochondrion inner membrane. Component of the ubiquinol-cytochrome c reductase complex (complex III or cytochrome b-c1 complex) that is part of the mitochondrial respiratory chain. The b-c1 complex mediates electron transfer from ubiquinol to cytochrome c. Contributes to the generation of a proton gradient across the mitochondrial membrane that is then used for ATP synthesis. The sequence is that of Cytochrome b (MT-CYB) from Bothrops atrox (Barba amarilla).